The chain runs to 618 residues: Leucine aminopeptidase 2 (618 aa).

Residues 139 to 141 (QCQ) and 271 to 276 (PYGGME) contribute to the a peptide site. His-300 contributes to the Zn(2+) binding site. The active-site Proton acceptor is the Glu-301. Zn(2+) contacts are provided by His-304 and Glu-323. Tyr-389 functions as the Proton donor in the catalytic mechanism.

It belongs to the peptidase M1 family. It depends on Zn(2+) as a cofactor.

Its subcellular location is the cytoplasm. The protein localises to the nucleus. It carries out the reaction an epoxide + H2O = an ethanediol. Aminopeptidase that preferentially cleaves di- and tripeptides. Also has low epoxide hydrolase activity (in vitro). Can hydrolyze the epoxide leukotriene LTA(4) but it forms preferentially 5,6-dihydroxy-7,9,11,14-eicosatetraenoic acid rather than the cytokine leukotriene B(4) as the product compared to the homologous mammalian enzyme (in vitro). This is Leucine aminopeptidase 2 from Aspergillus clavatus (strain ATCC 1007 / CBS 513.65 / DSM 816 / NCTC 3887 / NRRL 1 / QM 1276 / 107).